We begin with the raw amino-acid sequence, 234 residues long: Probable septum site-determining protein MinC (234 aa).

This sequence belongs to the MinC family. As to quaternary structure, interacts with MinD and FtsZ.

Functionally, cell division inhibitor that blocks the formation of polar Z ring septums. Rapidly oscillates between the poles of the cell to destabilize FtsZ filaments that have formed before they mature into polar Z rings. Prevents FtsZ polymerization. The protein is Probable septum site-determining protein MinC of Pseudoalteromonas translucida (strain TAC 125).